Consider the following 382-residue polypeptide: Dual-specificity RNA methyltransferase RlmN (382 aa).

Residue glutamate 94 is the Proton acceptor of the active site. One can recognise a Radical SAM core domain in the interval 100 to 336 (EANRGTLCVS…NTITRKTRGD (237 aa)). Cysteine 107 and cysteine 342 are joined by a disulfide. [4Fe-4S] cluster-binding residues include cysteine 114, cysteine 118, and cysteine 121. S-adenosyl-L-methionine-binding positions include 168–169 (GE), serine 200, 222–224 (SLH), and asparagine 299. Residue cysteine 342 is the S-methylcysteine intermediate of the active site.

This sequence belongs to the radical SAM superfamily. RlmN family. Requires [4Fe-4S] cluster as cofactor.

The protein resides in the cytoplasm. It catalyses the reaction adenosine(2503) in 23S rRNA + 2 reduced [2Fe-2S]-[ferredoxin] + 2 S-adenosyl-L-methionine = 2-methyladenosine(2503) in 23S rRNA + 5'-deoxyadenosine + L-methionine + 2 oxidized [2Fe-2S]-[ferredoxin] + S-adenosyl-L-homocysteine. The enzyme catalyses adenosine(37) in tRNA + 2 reduced [2Fe-2S]-[ferredoxin] + 2 S-adenosyl-L-methionine = 2-methyladenosine(37) in tRNA + 5'-deoxyadenosine + L-methionine + 2 oxidized [2Fe-2S]-[ferredoxin] + S-adenosyl-L-homocysteine. Specifically methylates position 2 of adenine 2503 in 23S rRNA and position 2 of adenine 37 in tRNAs. m2A2503 modification seems to play a crucial role in the proofreading step occurring at the peptidyl transferase center and thus would serve to optimize ribosomal fidelity. The polypeptide is Dual-specificity RNA methyltransferase RlmN (Legionella pneumophila subsp. pneumophila (strain Philadelphia 1 / ATCC 33152 / DSM 7513)).